The following is a 277-amino-acid chain: Protein OPG166 (277 aa).

Residues Asn29 and Asn58 are each glycosylated (N-linked (GlcNAc...) asparagine; by host). 5 helical membrane-spanning segments follow: residues 124 to 144, 156 to 176, 186 to 206, 219 to 239, and 247 to 267; these read TMLM…EIAY, GILQ…AFLF, IIGL…KVFS, LIIY…GLSL, and LLLS…LFLV.

The protein belongs to the orthopoxvirus OPG166 protein family.

The protein localises to the host membrane. Promotes, when overexpressed, the influx of extracellular Ca(2+), leading to membrane permeability and host cell necrosis. This chain is Protein OPG166 (OPG166), found in Variola virus (isolate Human/India/Ind3/1967) (VARV).